The following is a 131-amino-acid chain: Phosphoribosyl-AMP cyclohydrolase (131 aa).

Residue Asp78 coordinates Mg(2+). Cys79 contributes to the Zn(2+) binding site. Mg(2+) is bound by residues Asp80 and Asp82. Zn(2+) is bound by residues Cys96 and Cys103.

This sequence belongs to the PRA-CH family. As to quaternary structure, homodimer. Mg(2+) serves as cofactor. Zn(2+) is required as a cofactor.

It localises to the cytoplasm. The catalysed reaction is 1-(5-phospho-beta-D-ribosyl)-5'-AMP + H2O = 1-(5-phospho-beta-D-ribosyl)-5-[(5-phospho-beta-D-ribosylamino)methylideneamino]imidazole-4-carboxamide. It participates in amino-acid biosynthesis; L-histidine biosynthesis; L-histidine from 5-phospho-alpha-D-ribose 1-diphosphate: step 3/9. Its function is as follows. Catalyzes the hydrolysis of the adenine ring of phosphoribosyl-AMP. This Thioalkalivibrio sulfidiphilus (strain HL-EbGR7) protein is Phosphoribosyl-AMP cyclohydrolase.